A 175-amino-acid chain; its full sequence is Disulfide bond formation protein B (175 aa).

Residues 1-13 (MTAFTRFAHSRAS) are Cytoplasmic-facing. A helical transmembrane segment spans residues 14 to 30 (WLILTGSAIALEAAALY). Residues 31–48 (FQYVMKLDPCVMCIYQRL) lie on the Periplasmic side of the membrane. An intrachain disulfide couples C40 to C43. Residues 49-64 (AVFGILAAGLIGMTAP) traverse the membrane as a helical segment. The Cytoplasmic portion of the chain corresponds to 65-71 (KYRIVRI). A helical membrane pass occupies residues 72–89 (LGALGWAVSATWGLKLAL). The Periplasmic portion of the chain corresponds to 90–144 (ALVDMQNNPSPFSTCSFLPEFPAWMPLHEWFPSVMLPTGMCTDVPWQFMGVTMAE). Residues C104 and C130 are joined by a disulfide bond. Residues 145–163 (WMVVAFSGYLVALLLFIVP) traverse the membrane as a helical segment. Residues 164–175 (ILSGSNKPSLYK) lie on the Cytoplasmic side of the membrane.

This sequence belongs to the DsbB family.

The protein resides in the cell inner membrane. Functionally, required for disulfide bond formation in some periplasmic proteins. Acts by oxidizing the DsbA protein. This chain is Disulfide bond formation protein B, found in Shewanella sp. (strain MR-4).